The primary structure comprises 822 residues: Sushi domain-containing protein 2 (822 aa).

An N-terminal signal peptide occupies residues 1–27 (MKPALLPWALLLLATALGPGPGPTADA). Residues 28–66 (QESCSMRCGALDGPCSCHPTCSGLGTCCLDFRDFCLEIL) form the SMB domain. Residues 28–785 (QESCSMRCGA…PKCQPGRSYA (758 aa)) are Extracellular-facing. Disulfide bonds link cysteine 31–cysteine 35, cysteine 31–cysteine 44, cysteine 35–cysteine 62, cysteine 42–cysteine 44, cysteine 42–cysteine 55, cysteine 48–cysteine 54, and cysteine 55–cysteine 62. Residues asparagine 162 and asparagine 177 are each glycosylated (N-linked (GlcNAc...) asparagine). Positions 285-433 (PVAWARTQCQ…PDCPRYMQRR (149 aa)) constitute an AMOP domain. The 195-residue stretch at 445–639 (RLASAFGDPH…NWTVHNASSL (195 aa)) folds into the VWFD domain. N-linked (GlcNAc...) asparagine glycosylation is present at asparagine 522. One can recognise a Sushi domain in the interval 723 to 780 (VSCGWLAPPPNGQKEGNRYLAGSTIYFHCDNGYSLAGAETSTCQADGTWSSPTPKCQP). 2 cysteine pairs are disulfide-bonded: cysteine 725/cysteine 765 and cysteine 751/cysteine 778. Residues 786 to 806 (VLLGIIFGGLAVVAAVALVYV) traverse the membrane as a helical segment. Over 807 to 822 (LLRRRKGNTHVWGAQP) the chain is Cytoplasmic.

Interacts with LGALS1; leads to an increased amount of LGALS1 on the cell surface. Interacts with GPR15LG; the interaction is direct. Highly expressed in breast cancer, but shows a restricted expression pattern in normal tissues such as adipose, adrenal gland, kidney, lung, mammary gland, placenta, thyroid, trachea, and uterus. Also expressed in colon; down-regulated in colon cancer tissues.

The protein localises to the cell membrane. Its function is as follows. May be a cytokine receptor for GPR15LG. May be a tumor suppressor; together with GPR15LG has a growth inhibitory effect on colon cancer cells which includes G1 cell cycle arrest. May play a role in breast tumorigenesis. The sequence is that of Sushi domain-containing protein 2 (SUSD2) from Homo sapiens (Human).